Here is an 844-residue protein sequence, read N- to C-terminus: Eukaryotic translation elongation factor 2 (844 aa).

A tr-type G domain is found at 17 to 348 (RNIRNMSVIA…MIAIHLPSPV (332 aa)). A GTP-binding site is contributed by 26 to 33 (AHVDHGKS). T57 and T59 each carry phosphothreonine. Residues 162–165 (NKMD) and 219–221 (SGL) contribute to the GTP site. At H701 the chain carries Diphthamide.

Belongs to the TRAFAC class translation factor GTPase superfamily. Classic translation factor GTPase family. EF-G/EF-2 subfamily. In terms of processing, phosphorylation by EF-2 kinase completely inactivates eEF2.

It is found in the cytoplasm. It catalyses the reaction GTP + H2O = GDP + phosphate + H(+). Catalyzes the GTP-dependent ribosomal translocation step during translation elongation. During this step, the ribosome changes from the pre-translocational (PRE) to the post-translocational (POST) state as the newly formed A-site-bound peptidyl-tRNA and P-site-bound deacylated tRNA move to the P and E sites, respectively. Catalyzes the coordinated movement of the two tRNA molecules, the mRNA and conformational changes in the ribosome. This is Eukaryotic translation elongation factor 2 from Drosophila melanogaster (Fruit fly).